The chain runs to 1411 residues: Regulating synaptic membrane exocytosis protein 2 (1411 aa).

The segment at 1–33 (MSAPVGPRGRLAPIPAASQPPLQPEMPDLSHLT) is disordered. Residues 26–185 (MPDLSHLTEE…TKSGAWFYNS (160 aa)) enclose the RabBD domain. The FYVE-type zinc-finger motif lies at 117-173 (KGDAPTCGICHKTKFADGCGHNCSYCQTKFCARCGGRVSLRSNKVMWVCNLCRKQQE). Positions 123, 126, 139, 142, 147, 150, 165, and 168 each coordinate Zn(2+). Composition is skewed to basic and acidic residues over residues 203–216 (NEEAPQEKKPKLHE), 273–287 (DQNRRYDQREEREEY), 318–329 (DSDHLSYRDSNR), 348–366 (RDEYERQRREEEYQSRYRS), 382–401 (EQMRIHAEVSRARHERRHSD), and 410–434 (EDSRISMLRMDRPSRQRSISERRAA). Disordered stretches follow at residues 203 to 598 (NEEA…SERQ) and 623 to 650 (SGVDTCSSTTLNEEHSHSDKHPVTWQPS). Ser400 is subject to Phosphoserine. Residues 451-463 (GPSSYAQRTTNHS) show a composition bias toward polar residues. Positions 475–492 (DRPDLRRTDSLRKQHHLD) are enriched in basic and acidic residues. Residues 510 to 521 (RNDSLSSDQSES) show a composition bias toward polar residues. Basic residues predominate over residues 528-537 (KPHKSKKGGK). The span at 558-568 (SCDDVEIESES) shows a compositional bias: acidic residues. Composition is skewed to basic and acidic residues over residues 569–583 (VSEKGDSQKGKRKTS) and 634–644 (NEEHSHSDKHP). One can recognise a PDZ domain in the interval 668 to 754 (DGSVPRDSGA…EPQVELVVSR (87 aa)). A Phosphothreonine modification is found at Thr689. The tract at residues 762–793 (IPDSTHAQLESSSSSFESQKMDRPSISVTSPM) is disordered. Ser791 and Ser794 each carry phosphoserine. The 124-residue stretch at 805–928 (LSGQLSIKLW…ALLDDEPHWY (124 aa)) folds into the C2 1 domain. Disordered stretches follow at residues 939-973 (PLPHPSPYMPRRQLHGESPTRRLQRSKRISDSEVS) and 993-1190 (DLQS…STET). Composition is skewed to polar residues over residues 994-1015 (LQSSTLSVPEQVMSSNHCSPSG) and 1049-1059 (RTMTGHYNTIS). Over residues 1060–1113 (RMDRHRVMDDHYSPDRDRDCEAADRQPYHRSRSTEQRPLLERTTTRSRSTERPD) the composition is skewed to basic and acidic residues. Positions 1143-1153 (GSVQTSPSSTP) are enriched in polar residues. Residue Ser1148 is modified to Phosphoserine. A C2 2 domain is found at 1257–1375 (AMGDIQVGMM…ELSNMVIGWF (119 aa)). Phosphoserine occurs at positions 1396 and 1399.

As to quaternary structure, interacts with RAB3A and RAB3B that have been activated by GTP-binding. Interacts with RAB3C, RAB3D and RAB26. Interacts with TSPOAP1 and RIMBP2. Interacts with PPFIA3 and PPFIA4. Interacts via its zinc finger with the first C2 domain of UNC13A. Forms a complex consisting of UNC13A, RIMS2 and RAB3A. Heterodimer with PCLO. Part of a ternary complex involving PCLO and EPAC2. Widely expressed. Expressed in melanocytes. In fetal tissues, predominantly expressed in the brain. In the retina, expressed in the outer plexiform layer (at protein level). In the cerebellum, expressed in Purkinje cells (at protein level). In the pancreas, expressed in Langerhans islets (at protein level).

Its subcellular location is the cell membrane. It localises to the synapse. The protein localises to the presynaptic cell membrane. In terms of biological role, rab effector involved in exocytosis. May act as scaffold protein. Plays a role in dendrite formation by melanocytes. The sequence is that of Regulating synaptic membrane exocytosis protein 2 (RIMS2) from Homo sapiens (Human).